Reading from the N-terminus, the 409-residue chain is LL-diaminopimelate aminotransferase (409 aa).

Positions 15 and 42 each coordinate substrate. Residues tyrosine 72, alanine 108–lysine 109, tyrosine 132, asparagine 186, tyrosine 217, and serine 245–serine 247 each bind pyridoxal 5'-phosphate. Residues lysine 109, tyrosine 132, and asparagine 186 each contribute to the substrate site. Lysine 248 carries the post-translational modification N6-(pyridoxal phosphate)lysine. Positions 256 and 291 each coordinate pyridoxal 5'-phosphate. Residues asparagine 291 and arginine 386 each contribute to the substrate site.

The protein belongs to the class-I pyridoxal-phosphate-dependent aminotransferase family. LL-diaminopimelate aminotransferase subfamily. As to quaternary structure, homodimer. Pyridoxal 5'-phosphate is required as a cofactor.

The catalysed reaction is (2S,6S)-2,6-diaminopimelate + 2-oxoglutarate = (S)-2,3,4,5-tetrahydrodipicolinate + L-glutamate + H2O + H(+). Its pathway is amino-acid biosynthesis; L-lysine biosynthesis via DAP pathway; LL-2,6-diaminopimelate from (S)-tetrahydrodipicolinate (aminotransferase route): step 1/1. Its function is as follows. Involved in the synthesis of meso-diaminopimelate (m-DAP or DL-DAP), required for both lysine and peptidoglycan biosynthesis. Catalyzes the direct conversion of tetrahydrodipicolinate to LL-diaminopimelate. This chain is LL-diaminopimelate aminotransferase, found in Desulforapulum autotrophicum (strain ATCC 43914 / DSM 3382 / VKM B-1955 / HRM2) (Desulfobacterium autotrophicum).